The chain runs to 668 residues: MDNSIFYSLGNGIKFNKNKYKKEIGIFNGITSHELDKQTKTNNKVHFFKNTTPSTPVISKKDNIKQKKEEEEDNDNDNEESKEDDDFVEDDDNDDDDDDDDEDEENEEPKEKEFIKHQVNNDEEEEDITLFNKSNENENSDDSDDSDDSGKNKNKNKNKKVSKETQEDKHKREIATFRNKHRIKVDGTDIPDPMTEFSQLENRFKVRKYLLNNINEIGYKEPSPIQMQVIPILLKEREVVAIAPTGSGKTASFSIPILQALYEPKKEGFRSVIIAPTRELAQQIYRNFRLLSKGKPFRICVLSKNLHNQSTNENLIKNYDILITTPLRLVYLIKENLLSLNKVEYLVFDEADKLFDKNFQEQVDIVVTACQNPKLKICLFSATMNQQVEELGHSIMKNPIKIIIGEQNAAAITVDQKLIYVGKEEGKLLAVRQLIQKGLEPPILIFTQSKERAHDLFQELIFDGINVDVIHSERTQFQRDTIVKKFRMGKIWVLICTELMARGMDFKGVNFVINFDFPHTLASYIHRIGRTGRAGRPGVAYTLYTDADTPMLPTIVHAMKQSGSHVPDWMLNLKVQGKKKQQYRLKGVERESFSTIPLSERTSSKFKLRKNKKSFNLPGDQQKSNENNNNNNNNNNDNKKRKSFNNNGEKNNNPERKQKQIKKPKKII.

The segment at 37-174 (KQTKTNNKVH…TQEDKHKREI (138 aa)) is disordered. Polar residues predominate over residues 40–57 (KTNNKVHFFKNTTPSTPV). The span at 59 to 69 (SKKDNIKQKKE) shows a compositional bias: basic and acidic residues. Acidic residues predominate over residues 70–108 (EEEDNDNDNEESKEDDDFVEDDDNDDDDDDDDEDEENEE). Over residues 109 to 120 (PKEKEFIKHQVN) the composition is skewed to basic and acidic residues. A compositionally biased stretch (acidic residues) spans 138 to 147 (ENSDDSDDSD). Basic and acidic residues predominate over residues 161–174 (VSKETQEDKHKREI). A Q motif motif is present at residues 199–227 (QLENRFKVRKYLLNNINEIGYKEPSPIQM). One can recognise a Helicase ATP-binding domain in the interval 230–402 (IPILLKEREV…HSIMKNPIKI (173 aa)). An ATP-binding site is contributed by 243–250 (APTGSGKT). A DEAD box motif is present at residues 349 to 352 (DEAD). The 162-residue stretch at 413–574 (TVDQKLIYVG…HVPDWMLNLK (162 aa)) folds into the Helicase C-terminal domain. The segment at 601–668 (RTSSKFKLRK…KQIKKPKKII (68 aa)) is disordered. A compositionally biased stretch (basic residues) spans 604-613 (SKFKLRKNKK). Low complexity predominate over residues 624 to 636 (SNENNNNNNNNNN). Residues 659-668 (KQIKKPKKII) show a composition bias toward basic residues.

Belongs to the DEAD box helicase family. DDX52/ROK1 subfamily.

Its subcellular location is the nucleus. It localises to the nucleolus. It carries out the reaction ATP + H2O = ADP + phosphate + H(+). In terms of biological role, ATP-binding RNA helicase which may be involved in the ribosome biogenesis. The protein is Probable ATP-dependent RNA helicase ddx52 (ddx52) of Dictyostelium discoideum (Social amoeba).